Reading from the N-terminus, the 103-residue chain is Putative glutaredoxin-C14 (103 aa).

Residues 1–102 (MDRVMKLASE…PMLKNAGALW (102 aa)) form the Glutaredoxin domain. Cys-21 and Cys-24 are joined by a disulfide. A Responsive for interaction with TGA factors motif is present at residues 100–103 (ALWL).

This sequence belongs to the glutaredoxin family. CC-type subfamily.

It is found in the cytoplasm. The protein localises to the nucleus. In terms of biological role, has a glutathione-disulfide oxidoreductase activity in the presence of NADPH and glutathione reductase. Reduces low molecular weight disulfides and proteins. This is Putative glutaredoxin-C14 (GRXC14) from Oryza sativa subsp. japonica (Rice).